Consider the following 868-residue polypeptide: Leucine--tRNA ligase (868 aa).

The short motif at 42–52 (PYPSGKLHMGH) is the 'HIGH' region element. Positions 627 to 631 (KMSKS) match the 'KMSKS' region motif. Lys-630 provides a ligand contact to ATP.

Belongs to the class-I aminoacyl-tRNA synthetase family.

It localises to the cytoplasm. It catalyses the reaction tRNA(Leu) + L-leucine + ATP = L-leucyl-tRNA(Leu) + AMP + diphosphate. In Pseudomonas putida (strain GB-1), this protein is Leucine--tRNA ligase.